The primary structure comprises 485 residues: Glutamyl-tRNA(Gln) amidotransferase subunit A (485 aa).

Residues Lys79 and Ser154 each act as charge relay system in the active site. Ser178 functions as the Acyl-ester intermediate in the catalytic mechanism.

Belongs to the amidase family. GatA subfamily. In terms of assembly, heterotrimer of A, B and C subunits.

It carries out the reaction L-glutamyl-tRNA(Gln) + L-glutamine + ATP + H2O = L-glutaminyl-tRNA(Gln) + L-glutamate + ADP + phosphate + H(+). Functionally, allows the formation of correctly charged Gln-tRNA(Gln) through the transamidation of misacylated Glu-tRNA(Gln) in organisms which lack glutaminyl-tRNA synthetase. The reaction takes place in the presence of glutamine and ATP through an activated gamma-phospho-Glu-tRNA(Gln). The protein is Glutamyl-tRNA(Gln) amidotransferase subunit A of Staphylococcus aureus (strain Mu3 / ATCC 700698).